Here is a 190-residue protein sequence, read N- to C-terminus: Putative 3-methyladenine DNA glycosylase (190 aa).

It belongs to the DNA glycosylase MPG family.

This Rubrobacter xylanophilus (strain DSM 9941 / JCM 11954 / NBRC 16129 / PRD-1) protein is Putative 3-methyladenine DNA glycosylase.